The sequence spans 265 residues: MIKWPWKVQESAHQTALPWQEALSIPLLTGLTEQEQSKLVTLAERFLQQKRLVPLQGFELDSLRSCRIALLFCLPVLELGLEWLDGFHEVLIYPAPFVVDDEWEDDIGLVHNQRIVQSGQSWQQGPIVLNWLDIQDSFDASGFNLIIHEVAHKLDTRNGDRASGVPFIPLREVAGWEHDLHAAMNNIQEEIELVGENAASIDAYAASDPAECFAVLSEYFFSAPELFAPRFPSLWQRFCQFYQQDPLQRLHRTNDTDSFSATNVH.

Zn(2+) is bound by residues H111, H148, H152, and E211.

This sequence belongs to the MtfA family. In terms of assembly, interacts with Mlc. Zn(2+) is required as a cofactor.

It is found in the cytoplasm. Involved in the modulation of the activity of the glucose-phosphotransferase system (glucose-PTS). Interacts with the transcriptional repressor Mlc, preventing its interaction with DNA and leading to the modulation of expression of genes regulated by Mlc, including ptsG, which encodes the PTS system glucose-specific EIICB component. Functionally, shows zinc-dependent metallopeptidase activity. This is Mlc titration factor A from Escherichia coli O9:H4 (strain HS).